Here is a 125-residue protein sequence, read N- to C-terminus: Small ribosomal subunit protein uS12c (125 aa).

Belongs to the universal ribosomal protein uS12 family. As to quaternary structure, part of the 30S ribosomal subunit.

The protein localises to the plastid. Functionally, with S4 and S5 plays an important role in translational accuracy. Located at the interface of the 30S and 50S subunits. This Euglena longa (Euglenophycean alga) protein is Small ribosomal subunit protein uS12c (rps12).